A 308-amino-acid chain; its full sequence is Transaldolase (308 aa).

The Schiff-base intermediate with substrate role is filled by lysine 125.

The protein belongs to the transaldolase family. Type 1 subfamily. Homodimer.

It is found in the cytoplasm. The enzyme catalyses D-sedoheptulose 7-phosphate + D-glyceraldehyde 3-phosphate = D-erythrose 4-phosphate + beta-D-fructose 6-phosphate. It participates in carbohydrate degradation; pentose phosphate pathway; D-glyceraldehyde 3-phosphate and beta-D-fructose 6-phosphate from D-ribose 5-phosphate and D-xylulose 5-phosphate (non-oxidative stage): step 2/3. Its function is as follows. Transaldolase is important for the balance of metabolites in the pentose-phosphate pathway. This chain is Transaldolase, found in Pseudomonas fluorescens (strain Pf0-1).